The following is a 315-amino-acid chain: Leukocidin-S subunit (315 aa).

A signal peptide spans 1-29 (MLKNKILATTLSVSLLAPLANPLLENAKA).

This sequence belongs to the aerolysin family. Leukocidin consists of two protein components: F and S.

Functionally, leukocidin causes cytotoxic changes in polymorphonuclear leukocytes. This is Leukocidin-S subunit (lukS) from Staphylococcus aureus.